A 451-amino-acid polypeptide reads, in one-letter code: Phosphoglucosamine mutase (451 aa).

Catalysis depends on serine 102, which acts as the Phosphoserine intermediate. Mg(2+) is bound by residues serine 102, aspartate 242, aspartate 244, and aspartate 246. Phosphoserine is present on serine 102.

Belongs to the phosphohexose mutase family. Mg(2+) serves as cofactor. Post-translationally, activated by phosphorylation.

It catalyses the reaction alpha-D-glucosamine 1-phosphate = D-glucosamine 6-phosphate. Catalyzes the conversion of glucosamine-6-phosphate to glucosamine-1-phosphate. In Staphylococcus aureus (strain USA300), this protein is Phosphoglucosamine mutase.